Consider the following 347-residue polypeptide: MTEEMSKESPPPPPTSFSSLPDDVALDCRARISRFHYPTLSLVSKGFRTLIASPELEATRSFIGKPENHLCVCLRLYKNPNPLWFIFSPIPKQKLKPIVPWFPNQQYPQYPTVVSNGSQIYIIGGFVRRRRSNRVSIFDYRTYQWRRLPKMRQPRVYPAASVIDGKIYVIGGFRGSMPTDIENSGEVYDPKTNTWEPILLTSLDLTVQNVFKKKHYFTTKACLVINKVSCLLYVSDGKLYWREDKEGFECRKVYGLAEQSSNLFRVVANSGGGGRVTVWWKSMTKGCEFDCLLTEECETKIWCAEISLERRGLRELRGFVEWSKEVFTIDRCDYIYDFISQYVTVTY.

Positions 1–21 are disordered; sequence MTEEMSKESPPPPPTSFSSLP. The F-box domain maps to 14–62; it reads PTSFSSLPDDVALDCRARISRFHYPTLSLVSKGFRTLIASPELEATRSF. 2 Kelch repeats span residues 119-165 and 167-215; these read QIYI…VIDG and IYVI…KKKH.

This is F-box/kelch-repeat protein At5g03020 from Arabidopsis thaliana (Mouse-ear cress).